A 357-amino-acid chain; its full sequence is Heat-inducible transcription repressor HrcA (357 aa).

It belongs to the HrcA family.

Negative regulator of class I heat shock genes (grpE-dnaK-dnaJ and groELS operons). Prevents heat-shock induction of these operons. This Ureaplasma parvum serovar 3 (strain ATCC 27815 / 27 / NCTC 11736) protein is Heat-inducible transcription repressor HrcA.